The chain runs to 277 residues: Hemin import ATP-binding protein HmuV (277 aa).

The region spanning 25 to 260 (IHAQGLNLIL…DIIERVYGWP (236 aa)) is the ABC transporter domain. ATP is bound at residue 57-64 (GPNGAGKS).

The protein belongs to the ABC transporter superfamily. Heme (hemin) importer (TC 3.A.1.14.5) family. The complex is composed of two ATP-binding proteins (HmuV), two transmembrane proteins (HmuU) and a solute-binding protein (HmuT).

The protein resides in the cell inner membrane. In terms of biological role, part of the ABC transporter complex HmuTUV involved in hemin import. Responsible for energy coupling to the transport system. The chain is Hemin import ATP-binding protein HmuV from Photobacterium profundum (strain SS9).